A 722-amino-acid chain; its full sequence is Cellulose synthase-like protein G2 (722 aa).

2 helical membrane-spanning segments follow: residues 25–45 and 51–71; these read IYAVFHTCGIIALMYHHVHSI and TLITCLLLLSDIVLAFMWATT. Residues Asp-139 and Asp-437 contribute to the active site. The next 6 helical transmembrane spans lie at 514 to 534, 548 to 568, 583 to 605, 635 to 655, 660 to 680, and 702 to 722; these read FWPFWCIPLVVYGILPQVALI, FWLYIILFLGGYAQDLSDFLL, WMVRGLSSFFFGFTEFTLKTLNL, PSSSMFLPITTVAIMNLLAFM, GIFTWGEGPVLELMLASFAVV, and ICFLAGLLSFVLTGSGYFFLK.

The protein belongs to the glycosyltransferase 2 family. Plant cellulose synthase-like G subfamily. As to expression, expressed in young seedlings, primarily in the vascular tissue.

It localises to the golgi apparatus membrane. In terms of biological role, thought to be a Golgi-localized beta-glycan synthase that polymerize the backbones of noncellulosic polysaccharides (hemicelluloses) of plant cell wall. In Arabidopsis thaliana (Mouse-ear cress), this protein is Cellulose synthase-like protein G2 (CSLG2).